We begin with the raw amino-acid sequence, 369 residues long: Protein phosphatase 1 regulatory inhibitor subunit PPP1R8 homolog (369 aa).

Basic and acidic residues predominate over residues 1 to 11; that stretch reads MYGRSGLDRFK. The segment at 1 to 26 is disordered; the sequence is MYGRSGLDRFKKSQTSEPFSVSANPP. A compositionally biased stretch (polar residues) spans 13 to 23; sequence SQTSEPFSVSA. The 52-residue stretch at 87 to 138 folds into the FHA domain; sequence HIFGRQHQTCDFVLDHQSVSRQHAAVVPHKNGSIFVIDLGSAHGTFVANERL. The disordered stretch occupies residues 345 to 369; sequence VSQPAAETECGGVGEEDDNDDLFGD. The span at 358–369 shows a compositional bias: acidic residues; it reads GEEDDNDDLFGD.

Interacts with human protein phosphatase PPP1C.

Its function is as follows. Inhibitor of protein-phosphatase 1 (PP1). Binds to and inhibits PP1 activity. This is Protein phosphatase 1 regulatory inhibitor subunit PPP1R8 homolog from Arabidopsis thaliana (Mouse-ear cress).